Consider the following 312-residue polypeptide: ADIPOR-like receptor IZH4 (312 aa).

The interval 1–38 (MVSLTTIEQSPVKCETTTEKESNDTRGTDSNENAETKE) is disordered. Over 1–64 (MVSLTTIEQS…YKNKSSRNES (64 aa)) the chain is Cytoplasmic. Residues 16–38 (TTTEKESNDTRGTDSNENAETKE) show a composition bias toward basic and acidic residues. Residues 65–85 (LVALIYLLGSMLSFCLLIFFT) traverse the membrane as a helical segment. Over 86-101 (DFYLIPLFPTTTTMTD) the chain is Lumenal. Residues 102 to 122 (YIVFNFYLLNVFVFCMVHFIY) form a helical membrane-spanning segment. Over 123–141 (HFVKNISLQQHLEHWQKFS) the chain is Cytoplasmic. Residues 142 to 162 (YLSNINLLISSQITILYYLFY) traverse the membrane as a helical segment. Topologically, residues 163–165 (DYV) are lumenal. A helical membrane pass occupies residues 166-186 (FFFKIFTLLMNFIGLVAYFFI). Residues 187–201 (LTDKLISSKRFNKTV) are Cytoplasmic-facing. Residues 202–222 (FFISVSVVCCSLPLLTAIITF) form a helical membrane-spanning segment. Residues 223-231 (DGLENLKER) are Lumenal-facing. The helical transmembrane segment at 232 to 252 (IKVNAITWELVALVAASIIYV) threads the bilayer. At 253-277 (TRFPESLFRRNKKEEGWNHSEYLFH) the chain is on the cytoplasmic side. Residues 278 to 298 (LLISGTAFYHFFILIQSYILM) form a helical membrane-spanning segment. The Lumenal portion of the chain corresponds to 299 to 312 (HSSLNQPELINFKS).

This sequence belongs to the ADIPOR family.

It is found in the endoplasmic reticulum membrane. ADIPOR-like receptor involved in zinc metabolism either by altering membrane sterol content or by directly altering cellular zinc levels. This chain is ADIPOR-like receptor IZH4 (IZH4), found in Saccharomyces cerevisiae (strain ATCC 204508 / S288c) (Baker's yeast).